Here is a 44-residue protein sequence, read N- to C-terminus: Non-structural protein 7b (44 aa).

A helical membrane pass occupies residues 9 to 29 (FYLCFLAFLLFLVLIMLLIFW).

The protein localises to the host membrane. The sequence is that of Non-structural protein 7b from Bat coronavirus HKU3 (BtCoV).